The following is a 150-amino-acid chain: Cytochrome c oxidase subunit 5A, mitochondrial (150 aa).

The transit peptide at 1–41 (MLGAALRRCAVAATARAGPRGLLHSAPTPGPAAAIQSVRCY) directs the protein to the mitochondrion. The SIFI-degron signature appears at 2-17 (LGAALRRCAVAATARA). Residues Lys87 and Lys113 each carry the N6-acetyllysine modification. Thr141 carries the post-translational modification Phosphothreonine.

The protein belongs to the cytochrome c oxidase subunit 5A family. In terms of assembly, component of the cytochrome c oxidase (complex IV, CIV), a multisubunit enzyme composed of 14 subunits. The complex is composed of a catalytic core of 3 subunits MT-CO1, MT-CO2 and MT-CO3, encoded in the mitochondrial DNA, and 11 supernumerary subunits COX4I, COX5A, COX5B, COX6A, COX6B, COX6C, COX7A, COX7B, COX7C, COX8 and NDUFA4, which are encoded in the nuclear genome. The complex exists as a monomer or a dimer and forms supercomplexes (SCs) in the inner mitochondrial membrane with NADH-ubiquinone oxidoreductase (complex I, CI) and ubiquinol-cytochrome c oxidoreductase (cytochrome b-c1 complex, complex III, CIII), resulting in different assemblies (supercomplex SCI(1)III(2)IV(1) and megacomplex MCI(2)III(2)IV(2)). Interacts with AFG1L. Interacts with RAB5IF. In terms of processing, in response to mitochondrial stress, the precursor protein is ubiquitinated by the SIFI complex in the cytoplasm before mitochondrial import, leading to its degradation. Within the SIFI complex, UBR4 initiates ubiquitin chain that are further elongated or branched by KCMF1.

It is found in the mitochondrion inner membrane. It participates in energy metabolism; oxidative phosphorylation. Its function is as follows. Component of the cytochrome c oxidase, the last enzyme in the mitochondrial electron transport chain which drives oxidative phosphorylation. The respiratory chain contains 3 multisubunit complexes succinate dehydrogenase (complex II, CII), ubiquinol-cytochrome c oxidoreductase (cytochrome b-c1 complex, complex III, CIII) and cytochrome c oxidase (complex IV, CIV), that cooperate to transfer electrons derived from NADH and succinate to molecular oxygen, creating an electrochemical gradient over the inner membrane that drives transmembrane transport and the ATP synthase. Cytochrome c oxidase is the component of the respiratory chain that catalyzes the reduction of oxygen to water. Electrons originating from reduced cytochrome c in the intermembrane space (IMS) are transferred via the dinuclear copper A center (CU(A)) of subunit 2 and heme A of subunit 1 to the active site in subunit 1, a binuclear center (BNC) formed by heme A3 and copper B (CU(B)). The BNC reduces molecular oxygen to 2 water molecules using 4 electrons from cytochrome c in the IMS and 4 protons from the mitochondrial matrix. The protein is Cytochrome c oxidase subunit 5A, mitochondrial (COX5A) of Cebuella pygmaea (Pygmy marmoset).